We begin with the raw amino-acid sequence, 536 residues long: Glucan 1,6-alpha-glucosidase (536 aa).

The active-site Nucleophile is the Asp194. The active-site Proton donor is Glu236.

The protein belongs to the glycosyl hydrolase 13 family.

Its subcellular location is the cytoplasm. It carries out the reaction Hydrolysis of (1-&gt;6)-alpha-D-glucosidic linkages in (1-&gt;6)-alpha-D-glucans and derived oligosaccharides.. Its function is as follows. The physiological substrates may be short isomaltosaccharides. This chain is Glucan 1,6-alpha-glucosidase (dexB), found in Streptococcus mutans serotype c (strain ATCC 700610 / UA159).